A 345-amino-acid chain; its full sequence is Uroporphyrinogen decarboxylase (345 aa).

Substrate contacts are provided by residues Arg27 to Arg31, Phe46, Asp76, Tyr152, Ser207, and His321.

It belongs to the uroporphyrinogen decarboxylase family. In terms of assembly, homodimer.

The protein resides in the cytoplasm. The enzyme catalyses uroporphyrinogen III + 4 H(+) = coproporphyrinogen III + 4 CO2. It participates in porphyrin-containing compound metabolism; protoporphyrin-IX biosynthesis; coproporphyrinogen-III from 5-aminolevulinate: step 4/4. In terms of biological role, catalyzes the decarboxylation of four acetate groups of uroporphyrinogen-III to yield coproporphyrinogen-III. The protein is Uroporphyrinogen decarboxylase of Staphylococcus aureus (strain Mu3 / ATCC 700698).